The chain runs to 513 residues: MSPNKDSSSLNSSGAGLVCLPPVSEELQLVWTQAVQTSELDGNEHLLQAFSYFPYPSLADIALLCLRHGLQMEKVKTWFMAQRLRCGISWSSEEIEETRARVVYHRDQLLFKSLLSFTHHAVRPPQEMPPVTPPEQVALGLRPLALSEPTQMKGLKVEPEEPFQVSQLPLNHQKVKEPLMMGSRTLNHQSDCQDLQISGLSKEQAGGGPDQSCGGGTASWNHSIAVHQPDKSPLISLLDNSCKEESEPSGTPPSSSASSPFQVLANGTTATPKPLQPLGYIPQSFSPSEQALSPQVEPLWSQRLRNNSVPSRVGPTEYLSPDMQHQRKTKRKTKEQLAILKSFFLQCQWARREDYHKLEQITGLPRPEIIQWFGDTRYALKHGQLKWFRDNAVLGTPSFQDPAISTSSTRSLKEWAKTPPLPAPPPPPDIRPLERYWAAHQQLQEADILKLSQASRLSTQQVLDWFDSRLPKPAEVVVCLDEEEEEEDEELPEDGEEEEEEEEEEDDDVIIRD.

A DNA-binding region (homeobox 1) is located at residues 31-90 (WTQAVQTSELDGNEHLLQAFSYFPYPSLADIALLCLRHGLQMEKVKTWFMAQRLRCGISW). Residues lysine 156, lysine 174, and lysine 176 each participate in a glycyl lysine isopeptide (Lys-Gly) (interchain with G-Cter in SUMO2) cross-link. Disordered regions lie at residues 200 to 221 (LSKEQAGGGPDQSCGGGTASWN), 241 to 287 (SCKE…SFSP), 303 to 328 (RLRNNSVPSRVGPTEYLSPDMQHQRK), 402 to 429 (PAISTSSTRSLKEWAKTPPLPAPPPPPD), and 480 to 513 (LDEEEEEEDEELPEDGEEEEEEEEEEDDDVIIRD). Gly residues predominate over residues 205 to 217 (AGGGPDQSCGGGT). Residues 248–260 (PSGTPPSSSASSP) are compositionally biased toward low complexity. Serine 320 carries the phosphoserine modification. 2 DNA-binding regions (homeobox) span residues 324 to 384 (QHQR…KHGQ) and 418 to 477 (TPPL…AEVV). Residues 327–332 (RKTKRK) carry the Nuclear localization signal motif. Phosphothreonine is present on threonine 418. Pro residues predominate over residues 419–429 (PPLPAPPPPPD).

Homodimer or heterodimer (Potential). Interacts with HOXC8.

The protein resides in the nucleus. Its function is as follows. May function as a transcriptional regulator. The sequence is that of Homeobox and leucine zipper protein Homez (Homez) from Rattus norvegicus (Rat).